The following is an 875-amino-acid chain: MQRDLLSTINSMSARIKALERYEHALREIHKVIVVMRPGFNLQVLDPDAMPALIVQFFSDLTGRNTTHNINYRYDYNVGGALPFQPPPPQPFYPYGQYWPQQPPQPPPDQPQQPQPPQQPPQQPPQQQPQPPQPPQQPPQPPQPPPQQLALVQQIELSVDEVRELQALQLNMQQQTITWSHFATFIGTMTRILQTRVVNSAFLIGAIEALQNVDRLTNYDFNEFLRCVANETALRFEIAPDLCRVVAAFIQFFQKTHMVVYRTTFTYVNSQSLTASAEALHLVIVKLFWFFSKIYVYVMRAEFVYTNSTALAATIEELYARVEAIPVAAQNSAELAQLHAEMRALRTVTADLQGMRDSAEQRLQAANARYEAADAKSRELDQQLVRLRPLAAQSETLRFEKSELATENERLRGEIAALQNASANGLAGAETVSRLTASLADAQAQLTARTAEQNLVMAQKDNEYATKTQQAAADYVAKLNAEREAYERNLRAKEDGLGATIQRLQEENAELRSTLDNRNREFAQGSDQFAAVNMQLNEARRAVAEKNGQLVAANEIRARLEQQLADATQQLAKTEQLLVQQQKSGPMETDKQEINKEESDYLLTALDIMYKNARILNPNLGGRDLSQNLNDLQFGLASEQRLALEQWFSTLRETTAPNDVLNFAALTNVNDLVNDLKSQIITKIPANMLRTFDNRIVKPEEAGAVDNVTLISAVSRLVDEYSRLGLENAQLESTNKTLYDDNVTLSETCTQQLKSLRDDLNKNMSNVDAINDLVKTTPELDKQAIQDVRTELSKTQSRLKSLKEAKLVELKQMASTSALEEMSKLNNNIREINSLLSKHAAITEDIFKWKTTMLEVYESLARTMAEENVLPPPTL.

Residues 83–149 form a disordered region; sequence PFQPPPPQPF…QPPQPPPQQL (67 aa). Positions 101-147 are enriched in pro residues; that stretch reads QQPPQPPPDQPQQPQPPQQPPQQPPQQQPQPPQPPQQPPQPPQPPPQ.

This is an uncharacterized protein from Orgyia pseudotsugata multicapsid polyhedrosis virus (OpMNPV).